Reading from the N-terminus, the 408-residue chain is uncharacterized protein (408 aa).

Residues 376 to 386 (NELNDPNSVYN) show a composition bias toward polar residues. The segment at 376–408 (NELNDPNSVYNSPEFDHQGDQKKLTEENGCVVQ) is disordered. Over residues 389 to 401 (EFDHQGDQKKLTE) the composition is skewed to basic and acidic residues.

This is an uncharacterized protein from Acanthamoeba polyphaga (Amoeba).